The primary structure comprises 784 residues: Toll-like receptor 2 (784 aa).

Positions 1–20 are cleaved as a signal peptide; sequence MPHTLWMVWVLGVIISLSKE. Over 21-588 the chain is Extracellular; it reads ESSNQASLSC…RLSVSECHRT (568 aa). Cysteine 30 and cysteine 36 are joined by a disulfide. LRR repeat units lie at residues 54–77, 78–101, 102–125, 126–150, 151–175, 176–199, 200–223, 224–250, 251–278, 279–308, 309–337, 338–361, 362–388, 389–414, 415–437, 438–457, 458–478, 479–500, and 501–524; these read VKSLDLSNNRITYISNSDLQRCVN, LQALVLTSNGINTIEEDSFSSLGS, LEHLDLSYNYLSNLSSSWFKPLSS, LTFLNLLGNPYKTLGETSLFSHLTK, LQILRVGNMDTFTKIQRKDFAGLTF, LEELEIDASDLQSYEPKSLKSIQN, VSHLILHMKQHILLLEIFVDVTSS, VECLELRDTDLDTFHFSELSTGETNSL, IKKFTFRNVKITDESLFQVMKLLNQISG, LLELEFDDCTLNGVGNFRASDNDRVIDPGK, VETLTIRRLHIPRFYLFYDLSTLYSLTER, VKRITVENSKVFLVPCLLSQHLKS, LEYLDLSENLMVEEYLKNSACEDAWPS, LQTLILRQNHLASLEKTGETLLTLKN, LTNIDISKNSFHSMPETCQWPEK, MKYLNLSSTRIHSVTGCIPK, TLEILDVSNNNLNLFSLNLPQ, LKELYISRNKLMTLPDASLLPM, and LLVLKISRNAITTFSKEQLDSFHT. Asparagine 114 is a glycosylation site (N-linked (GlcNAc...) asparagine). A glycan (N-linked (GlcNAc...) asparagine) is linked at asparagine 199. A disulfide bridge links cysteine 353 with cysteine 382. The N-linked (GlcNAc...) asparagine glycan is linked to asparagine 414. A disulfide bridge connects residues cysteine 432 and cysteine 454. Asparagine 442 carries an N-linked (GlcNAc...) asparagine glycan. In terms of domain architecture, LRRCT spans 525–579; the sequence is LKTLEAGGNNFICSCEFLSFTQEQQALAKVLIDWPANYLCDSPSHVRGQQVQDVR. Residues 589-609 form a helical membrane-spanning segment; that stretch reads ALVSGMCCALFLLILLTGVLC. Residues 610–784 lie on the Cytoplasmic side of the membrane; that stretch reads HRFHGLWYMK…WVNLRAAIKS (175 aa). Residues 639 to 782 form the TIR domain; it reads ICYDAFVSYS…GFWVNLRAAI (144 aa). Residue lysine 754 forms a Glycyl lysine isopeptide (Lys-Gly) (interchain with G-Cter in ubiquitin) linkage. An ATG16L1-binding motif motif is present at residues 761-778; sequence YLEWPMDEAQREGFWVNL.

Belongs to the Toll-like receptor family. As to quaternary structure, interacts with LY96, TLR1 and TLR6 (via extracellular domain). TLR2 seems to exist in heterodimers with either TLR1 or TLR6 before stimulation by the ligand. The heterodimers form bigger oligomers in response to their corresponding ligands as well as further heterotypic associations with other receptors such as CD14 and/or CD36. Binds MYD88 (via TIR domain). Interacts with TICAM1. Interacts with CNPY3. Interacts with ATG16L1. Interacts with PPP1R11. Interacts with TICAM2. Interacts with TIRAP. (Microbial infection) Interacts with M.tuberculosis EsxA. In terms of assembly, (Microbial infection) Interacts with M.bovis MPB83. As to quaternary structure, (Microbial infection) Interacts with Staphylococcus aureus protein SSL5. Post-translationally, glycosylation of Asn-442 is critical for secretion of the N-terminal ectodomain of TLR2. In terms of processing, ubiquitinated at Lys-754 by PPP1R11, leading to its degradation. Deubiquitinated by USP2. Highly expressed in peripheral blood leukocytes, in particular in monocytes, in bone marrow, lymph node and in spleen. Also detected in lung and in fetal liver. Levels are low in other tissues.

Its subcellular location is the membrane. The protein resides in the cytoplasmic vesicle. It localises to the phagosome membrane. It is found in the membrane raft. Its function is as follows. Cooperates with LY96 to mediate the innate immune response to bacterial lipoproteins and other microbial cell wall components. Cooperates with TLR1 or TLR6 to mediate the innate immune response to bacterial lipoproteins or lipopeptides. Acts via MYD88 and TRAF6, leading to NF-kappa-B activation, cytokine secretion and the inflammatory response. May also activate immune cells and promote apoptosis in response to the lipid moiety of lipoproteins. Recognizes mycoplasmal macrophage-activating lipopeptide-2kD (MALP-2), soluble tuberculosis factor (STF), phenol-soluble modulin (PSM) and B.burgdorferi outer surface protein A lipoprotein (OspA-L) cooperatively with TLR6. Stimulation of monocytes in vitro with M.tuberculosis PstS1 induces p38 MAPK and ERK1/2 activation primarily via this receptor, but also partially via TLR4. MAPK activation in response to bacterial peptidoglycan also occurs via this receptor. Acts as a receptor for M.tuberculosis lipoproteins LprA, LprG, LpqH and PstS1, some lipoproteins are dependent on other coreceptors (TLR1, CD14 and/or CD36); the lipoproteins act as agonists to modulate antigen presenting cell functions in response to the pathogen. M.tuberculosis HSP70 (dnaK) but not HSP65 (groEL-2) acts via this protein to stimulate NF-kappa-B expression. Recognizes M.tuberculosis major T-antigen EsxA (ESAT-6) which inhibits downstream MYD88-dependent signaling (shown in mouse). Forms activation clusters composed of several receptors depending on the ligand, these clusters trigger signaling from the cell surface and subsequently are targeted to the Golgi in a lipid-raft dependent pathway. Forms the cluster TLR2:TLR6:CD14:CD36 in response to diacylated lipopeptides and TLR2:TLR1:CD14 in response to triacylated lipopeptides. Required for normal uptake of M.tuberculosis, a process that is inhibited by M.tuberculosis LppM. This chain is Toll-like receptor 2, found in Homo sapiens (Human).